Reading from the N-terminus, the 244-residue chain is MVILETPRVFLIASWGSEAVISAFTDALYRGVPWEEAVKAQAPDVIIKRISAFYRQGHWSVFEFMGAQFLVECSRACHTQFIRHRMASYWSESQRYVDYTKREIRFVVPKGFPADLLKRAYEDYARLREGFRPEYARMILPNATAVLFAVQMNARELLLNFAPLRCAYAAQAEIRHVCWQMFAHAWRLWPNLARLVWEDLPSLHRDFCTKVPRGEDCRLYAIKDAEEKHGPLPETPWLSALVHG.

The ThyX domain maps to 7-199 (PRVFLIASWG…PNLARLVWED (193 aa)). Residues Ser60 and 83-85 (RHR) contribute to the FAD site. DUMP-binding positions include 80 to 83 (QFIR), 93 to 95 (SQR), and Arg137. The short motif at 83 to 93 (RHRMASYWSES) is the ThyX motif element. FAD contacts are provided by residues 153–155 (NAR) and Asn160. Residue Arg165 participates in dUMP binding. The active-site Involved in ionization of N3 of dUMP, leading to its activation is Arg165.

The protein belongs to the thymidylate synthase ThyX family. As to quaternary structure, homotetramer. It depends on FAD as a cofactor.

The catalysed reaction is dUMP + (6R)-5,10-methylene-5,6,7,8-tetrahydrofolate + NADPH + H(+) = dTMP + (6S)-5,6,7,8-tetrahydrofolate + NADP(+). It participates in pyrimidine metabolism; dTTP biosynthesis. In terms of biological role, catalyzes the reductive methylation of 2'-deoxyuridine-5'-monophosphate (dUMP) to 2'-deoxythymidine-5'-monophosphate (dTMP) while utilizing 5,10-methylenetetrahydrofolate (mTHF) as the methyl donor, and NADPH and FADH(2) as the reductant. This Pyrobaculum aerophilum (strain ATCC 51768 / DSM 7523 / JCM 9630 / CIP 104966 / NBRC 100827 / IM2) protein is Flavin-dependent thymidylate synthase.